Consider the following 89-residue polypeptide: Small ribosomal subunit protein uS15 (89 aa).

Belongs to the universal ribosomal protein uS15 family. As to quaternary structure, part of the 30S ribosomal subunit. Forms a bridge to the 50S subunit in the 70S ribosome, contacting the 23S rRNA.

One of the primary rRNA binding proteins, it binds directly to 16S rRNA where it helps nucleate assembly of the platform of the 30S subunit by binding and bridging several RNA helices of the 16S rRNA. In terms of biological role, forms an intersubunit bridge (bridge B4) with the 23S rRNA of the 50S subunit in the ribosome. The sequence is that of Small ribosomal subunit protein uS15 from Dictyoglomus thermophilum (strain ATCC 35947 / DSM 3960 / H-6-12).